A 137-amino-acid polypeptide reads, in one-letter code: Leaf-specific thionin (137 aa).

A signal peptide spans 1-28 (MATNKSIKSVVICVLILGLVLEQVQVEA). Disulfide bonds link Cys-31-Cys-68, Cys-32-Cys-60, Cys-40-Cys-58, and Cys-44-Cys-54. The propeptide at 75 to 137 (LNLLPESGEP…DGEVIQSVEA (63 aa)) is acidic domain.

The protein belongs to the plant thionin (TC 1.C.44) family. 4 C-C subfamily.

It localises to the secreted. In terms of biological role, thionins are small plant proteins which are toxic to animal cells. They seem to exert their toxic effect at the level of the cell membrane. Their precise function is not known. The polypeptide is Leaf-specific thionin (THI1.5) (Hordeum vulgare (Barley)).